The chain runs to 750 residues: uncharacterized protein (750 aa).

5 helical membrane-spanning segments follow: residues 2-22, 33-53, 79-99, 116-136, and 143-163; these read FVLL…TNVI, SLIL…DIFI, LLVL…VVSL, LSIF…TIML, and IQSL…SPIA. 2 disordered regions span residues 385–461 and 571–651; these read DNKG…KKKE and NKEF…PLTA. The span at 398 to 411 shows a compositional bias: basic and acidic residues; it reads ENTKGDDNSSEKTD. The segment covering 412-424 has biased composition (polar residues); the sequence is TVSVSTKLKTTAD. Positions 425–436 are enriched in low complexity; it reads QSESTQMSSEST. Positions 437-451 are enriched in polar residues; that stretch reads ATGISSDPQSQGKMN. A compositionally biased stretch (basic and acidic residues) spans 452–461; it reads NKSEEQKKKE. The span at 618-629 shows a compositional bias: polar residues; that stretch reads DSKGNTATNSDT. The helical transmembrane segment at 724–744 threads the bilayer; the sequence is ATIVITLFLTVVLLAIAFFFF.

The protein to M.pneumoniae MPN_335.

It localises to the cell membrane. This is an uncharacterized protein from Mycoplasma pneumoniae (strain ATCC 29342 / M129 / Subtype 1) (Mycoplasmoides pneumoniae).